Consider the following 531-residue polypeptide: Poly(A)-specific ribonuclease PNLDC1 (531 aa).

Mg(2+)-binding residues include Asp-28, Glu-30, Asp-271, and Asp-365. The helical transmembrane segment at 506-526 (ITCLLQVCSIVTTWAMIAFLL) threads the bilayer.

This sequence belongs to the CAF1 family. Requires Mg(2+) as cofactor. Specifically expressed in embryonic stem cells. Highly expressed in testis.

The protein resides in the endoplasmic reticulum membrane. The enzyme catalyses Exonucleolytic cleavage of poly(A) to 5'-AMP.. Functionally, 3'-exoribonuclease that has a preference for poly(A) tails of mRNAs, thereby efficiently degrading poly(A) tails. Exonucleolytic degradation of the poly(A) tail is often the first step in the decay of eukaryotic mRNAs and is also used to silence certain maternal mRNAs translationally during oocyte maturation and early embryonic development. May act as a regulator of multipotency in embryonic stem cells. Is a critical factor for proper spermatogenesis, involved in pre-piRNAs processing to generate mature piRNAs. This is Poly(A)-specific ribonuclease PNLDC1 from Mus musculus (Mouse).